We begin with the raw amino-acid sequence, 170 residues long: Ribosome maturation factor RimM (170 aa).

The PRC barrel domain maps to 96–169; that stretch reads EGEFYACDVE…VVQLATLEGL (74 aa).

This sequence belongs to the RimM family. As to quaternary structure, binds ribosomal protein uS19.

The protein resides in the cytoplasm. Its function is as follows. An accessory protein needed during the final step in the assembly of 30S ribosomal subunit, possibly for assembly of the head region. Essential for efficient processing of 16S rRNA. May be needed both before and after RbfA during the maturation of 16S rRNA. It has affinity for free ribosomal 30S subunits but not for 70S ribosomes. The polypeptide is Ribosome maturation factor RimM (Sorangium cellulosum (strain So ce56) (Polyangium cellulosum (strain So ce56))).